Here is a 155-residue protein sequence, read N- to C-terminus: MTIYEGTYIGSGLRIAIVVSRWNDLITNRLLEGARDGLLRHGVAADHIDIAWVPGSFELPLVCHRLAESSRYDAIIALGAVIRGATTHHEHVAAAASSGIAQVSLQTGVPCIFGVITTDNIEQAIERAGTKAGNKGFEAATAAIEMATLLQRLNG.

Residues tryptophan 22, 56-58 (SFE), and 80-82 (AVI) each bind 5-amino-6-(D-ribitylamino)uracil. 85–86 (AT) contributes to the (2S)-2-hydroxy-3-oxobutyl phosphate binding site. Residue histidine 88 is the Proton donor of the active site. 5-amino-6-(D-ribitylamino)uracil is bound at residue phenylalanine 113. A (2S)-2-hydroxy-3-oxobutyl phosphate-binding site is contributed by arginine 127.

Belongs to the DMRL synthase family.

The enzyme catalyses (2S)-2-hydroxy-3-oxobutyl phosphate + 5-amino-6-(D-ribitylamino)uracil = 6,7-dimethyl-8-(1-D-ribityl)lumazine + phosphate + 2 H2O + H(+). Its pathway is cofactor biosynthesis; riboflavin biosynthesis; riboflavin from 2-hydroxy-3-oxobutyl phosphate and 5-amino-6-(D-ribitylamino)uracil: step 1/2. Catalyzes the formation of 6,7-dimethyl-8-ribityllumazine by condensation of 5-amino-6-(D-ribitylamino)uracil with 3,4-dihydroxy-2-butanone 4-phosphate. This is the penultimate step in the biosynthesis of riboflavin. The protein is 6,7-dimethyl-8-ribityllumazine synthase of Chloroflexus aurantiacus (strain ATCC 29364 / DSM 637 / Y-400-fl).